The following is a 229-amino-acid chain: Uracil-DNA glycosylase (229 aa).

Asp-64 (proton acceptor) is an active-site residue.

The protein belongs to the uracil-DNA glycosylase (UDG) superfamily. UNG family.

Its subcellular location is the cytoplasm. It catalyses the reaction Hydrolyzes single-stranded DNA or mismatched double-stranded DNA and polynucleotides, releasing free uracil.. Excises uracil residues from the DNA which can arise as a result of misincorporation of dUMP residues by DNA polymerase or due to deamination of cytosine. In Shigella flexneri serotype 5b (strain 8401), this protein is Uracil-DNA glycosylase.